A 426-amino-acid polypeptide reads, in one-letter code: Glutamate-1-semialdehyde 2,1-aminomutase (426 aa).

K265 carries the post-translational modification N6-(pyridoxal phosphate)lysine.

This sequence belongs to the class-III pyridoxal-phosphate-dependent aminotransferase family. HemL subfamily. As to quaternary structure, homodimer. The cofactor is pyridoxal 5'-phosphate.

Its subcellular location is the cytoplasm. It catalyses the reaction (S)-4-amino-5-oxopentanoate = 5-aminolevulinate. It participates in porphyrin-containing compound metabolism; protoporphyrin-IX biosynthesis; 5-aminolevulinate from L-glutamyl-tRNA(Glu): step 2/2. The sequence is that of Glutamate-1-semialdehyde 2,1-aminomutase from Escherichia coli O127:H6 (strain E2348/69 / EPEC).